We begin with the raw amino-acid sequence, 494 residues long: Guanosine-5'-triphosphate,3'-diphosphate pyrophosphatase (494 aa).

It belongs to the GppA/Ppx family. GppA subfamily.

It catalyses the reaction guanosine 3'-diphosphate 5'-triphosphate + H2O = guanosine 3',5'-bis(diphosphate) + phosphate + H(+). Its pathway is purine metabolism; ppGpp biosynthesis; ppGpp from GTP: step 2/2. Functionally, catalyzes the conversion of pppGpp to ppGpp. Guanosine pentaphosphate (pppGpp) is a cytoplasmic signaling molecule which together with ppGpp controls the 'stringent response', an adaptive process that allows bacteria to respond to amino acid starvation, resulting in the coordinated regulation of numerous cellular activities. The polypeptide is Guanosine-5'-triphosphate,3'-diphosphate pyrophosphatase (Cronobacter sakazakii (strain ATCC BAA-894) (Enterobacter sakazakii)).